A 122-amino-acid chain; its full sequence is Large ribosomal subunit protein uL18 (122 aa).

This sequence belongs to the universal ribosomal protein uL18 family. As to quaternary structure, part of the 50S ribosomal subunit; part of the 5S rRNA/L5/L18/L25 subcomplex. Contacts the 5S and 23S rRNAs.

Its function is as follows. This is one of the proteins that bind and probably mediate the attachment of the 5S RNA into the large ribosomal subunit, where it forms part of the central protuberance. The polypeptide is Large ribosomal subunit protein uL18 (Leptospira interrogans serogroup Icterohaemorrhagiae serovar copenhageni (strain Fiocruz L1-130)).